Reading from the N-terminus, the 380-residue chain is Glutamine synthetase, chloroplastic (380 aa).

The GS beta-grasp domain maps to 35-125; sequence MAAEYIWADG…VMCEVFAPDG (91 aa). The GS catalytic domain maps to 132-380; it reads TRAKLREIID…RLLIKTVLKG (249 aa).

This sequence belongs to the glutamine synthetase family. In terms of assembly, homooctamer.

The protein resides in the plastid. It localises to the chloroplast. The enzyme catalyses L-glutamate + NH4(+) + ATP = L-glutamine + ADP + phosphate + H(+). The chain is Glutamine synthetase, chloroplastic (GLN2) from Chlamydomonas reinhardtii (Chlamydomonas smithii).